Reading from the N-terminus, the 458-residue chain is Protein RICE SALT SENSITIVE 3 (458 aa).

A compositionally biased stretch (gly residues) spans 1-17; sequence MVGSGAAGGGGGGGGGG. 4 disordered regions span residues 1–21, 220–325, 354–374, and 386–458; these read MVGSGAAGGGGGGGGGGDHAR, TSPS…PEGD, GGGADDGSKTAAAAQDAGHGG, and SHSN…TFLE. Over residues 220–232 the composition is skewed to low complexity; that stretch reads TSPSPSSFPLKQQ. Residues 245 to 262 are compositionally biased toward pro residues; it reads HAPPQLPPGASPLFPPGP. The segment covering 308 to 317 has biased composition (low complexity); sequence QQPMAAPQQH. A compositionally biased stretch (low complexity) spans 413–436; sequence SSSTTSTSPSVSASTAPAPPQQQQ.

In terms of assembly, interacts with BHLH094, BHLH089, TIFY11A/JAZ9 and TIFY11C/JAZ11. Forms a ternary complex with TIFY11A/JAZ9 and BHLH094 in the nucleus. Expressed in root tips. Expressed at high levels in the meristematic zone and at low levels in the elongation zone of the root tip.

The protein localises to the nucleus. Its subcellular location is the cytoplasm. Its function is as follows. Involved in the repression of jasmonate (JA)-induced genes. Forms a ternary complex with TIFY11A/JAZ9 and BHLH094 to negatively regulate JA-responsive genes. Involved in transcriptional regulation in the root tip. Plays a regulatory role in root cell elongation. Regulates root cell elongation during salt stress. In Oryza sativa subsp. japonica (Rice), this protein is Protein RICE SALT SENSITIVE 3.